The primary structure comprises 252 residues: Type III pantothenate kinase (252 aa).

An ATP-binding site is contributed by 6-13; the sequence is DIGNTSTA. 104–107 is a substrate binding site; it reads GADR. D106 serves as the catalytic Proton acceptor. Residue D128 participates in K(+) binding. ATP is bound at residue T131. Position 183 (T183) interacts with substrate.

Belongs to the type III pantothenate kinase family. As to quaternary structure, homodimer. Requires NH4(+) as cofactor. K(+) is required as a cofactor.

It is found in the cytoplasm. The enzyme catalyses (R)-pantothenate + ATP = (R)-4'-phosphopantothenate + ADP + H(+). It participates in cofactor biosynthesis; coenzyme A biosynthesis; CoA from (R)-pantothenate: step 1/5. Catalyzes the phosphorylation of pantothenate (Pan), the first step in CoA biosynthesis. In Thermus thermophilus (strain ATCC BAA-163 / DSM 7039 / HB27), this protein is Type III pantothenate kinase.